The following is a 308-amino-acid chain: 4-hydroxyproline 2-epimerase (308 aa).

C88 functions as the Proton acceptor in the catalytic mechanism. Residues 89-90, H208, and D232 each bind substrate; that span reads GH. C236 functions as the Proton donor in the catalytic mechanism. 237–238 contacts substrate; it reads GT.

This sequence belongs to the proline racemase family.

It catalyses the reaction trans-4-hydroxy-L-proline = cis-4-hydroxy-D-proline. In terms of biological role, catalyzes the reversible epimerization of cis-4-hydroxy-D-proline (c4DHyp) to trans-4-hydroxy-L-proline (t4LHyp). May be involved in a degradation pathway that allows P.putida strain KT2440 to grow on either epimer of 4-hydroxyproline, c4DHyp and t4LHyp, as the sole carbon and nitrogen source. Does not exhibit measureable racemase activity in vitro with any of the 19 natural chiral amino acid enantiomers. This is 4-hydroxyproline 2-epimerase from Pseudomonas putida (strain ATCC 47054 / DSM 6125 / CFBP 8728 / NCIMB 11950 / KT2440).